Here is a 118-residue protein sequence, read N- to C-terminus: DNA-binding protein YG5714_1868 (118 aa).

Belongs to the PDCD5 family.

In Saccharolobus islandicus (strain Y.G.57.14 / Yellowstone #1) (Sulfolobus islandicus), this protein is DNA-binding protein YG5714_1868.